A 206-amino-acid polypeptide reads, in one-letter code: LexA repressor (206 aa).

The H-T-H motif DNA-binding region spans 28–48; that stretch reads VREIGEAVGLASSSTVHGHLA. Residues S128 and K166 each act as for autocatalytic cleavage activity in the active site.

It belongs to the peptidase S24 family. In terms of assembly, homodimer.

The enzyme catalyses Hydrolysis of Ala-|-Gly bond in repressor LexA.. Its function is as follows. Represses a number of genes involved in the response to DNA damage (SOS response), including recA and lexA. In the presence of single-stranded DNA, RecA interacts with LexA causing an autocatalytic cleavage which disrupts the DNA-binding part of LexA, leading to derepression of the SOS regulon and eventually DNA repair. This chain is LexA repressor, found in Bacillus pumilus (strain SAFR-032).